The sequence spans 165 residues: Lymphocyte antigen 6K (165 aa).

Residues 1 to 17 (MALLALLLVVALPRVWT) form the signal peptide. N-linked (GlcNAc...) asparagine glycosylation occurs at asparagine 20. The 95-residue stretch at 47–141 (ERENTFECQN…VFKEYAGSMG (95 aa)) folds into the UPAR/Ly6 domain. The GPI-anchor amidated glycine moiety is linked to residue glycine 138. The propeptide at 139 to 165 (SMGESCGGLWLAILLLLASIAAGLSLS) is removed in mature form.

In terms of assembly, interacts with TEX101. As to expression, specifically expressed in testis (at protein level).

The protein resides in the secreted. Its subcellular location is the cytoplasm. The protein localises to the cell membrane. It is found in the cytoplasmic vesicle. It localises to the secretory vesicle. The protein resides in the acrosome. Its subcellular location is the membrane raft. Required for sperm migration into the oviduct and male fertility by controlling binding of sperm to zona pellucida. May play a role in cell growth. The protein is Lymphocyte antigen 6K of Homo sapiens (Human).